Reading from the N-terminus, the 454-residue chain is F-box protein At1g67130 (454 aa).

Residues 4–53 (GETLDSIPTDLILDILSRLPTKSIARFHCVSKLWSSMLASQDFTRLFVNR) enclose the F-box domain.

This chain is F-box protein At1g67130, found in Arabidopsis thaliana (Mouse-ear cress).